The primary structure comprises 547 residues: Inositol-tetrakisphosphate 1-kinase 6 (547 aa).

Lys263 provides a ligand contact to 1D-myo-inositol 1,3,4-trisphosphate. The ATP site is built by Arg317 and Lys370. Positions 327–539 (LEGLSAEGRP…FWDAIKQSYE (213 aa)) constitute an ATP-grasp domain. 2 residues coordinate 1D-myo-inositol 1,3,4-trisphosphate: His381 and Lys415. Residues 404–415 (QEYIDHGSKIFK), Ser430, and Ser450 contribute to the ATP site. Mg(2+) contacts are provided by Asp497, Asp511, and Asn513. 1D-myo-inositol 1,3,4-trisphosphate-binding residues include Asn513 and Ser517.

Belongs to the ITPK1 family. In terms of assembly, monomer. The cofactor is Mg(2+). Highly expressed in embryos and at lower levels in roots, leaves, flowers and anthers.

It carries out the reaction 1D-myo-inositol 3,4,5,6-tetrakisphosphate + ATP = 1D-myo-inositol 1,3,4,5,6-pentakisphosphate + ADP + H(+). It catalyses the reaction 1D-myo-inositol 1,3,4-trisphosphate + ATP = 1D-myo-inositol 1,3,4,5-tetrakisphosphate + ADP + H(+). The catalysed reaction is 1D-myo-inositol 1,3,4-trisphosphate + ATP = 1D-myo-inositol 1,3,4,6-tetrakisphosphate + ADP + H(+). Its function is as follows. Kinase that can phosphorylate various inositol polyphosphate such as Ins(3,4,5,6)P4 or Ins(1,3,4)P3 and participates in phytic acid biosynthesis in developing seeds. Phytic acid is the primary storage form of phosphorus in cereal grains and other plant seeds. The sequence is that of Inositol-tetrakisphosphate 1-kinase 6 (ITPK6) from Oryza sativa subsp. japonica (Rice).